Reading from the N-terminus, the 282-residue chain is Succinate dehydrogenase [ubiquinone] iron-sulfur subunit, mitochondrial (282 aa).

Residues 1–30 (MAATVGVSLKRGFPAAVLGRVGLQFQACRG) constitute a mitochondrion transit peptide. Residues 42–135 (KKFAIYRWDP…VSKIYPLPHM (94 aa)) form the 2Fe-2S ferredoxin-type domain. Residues Lys53 and Lys57 each carry the N6-acetyllysine modification. Residues Cys95, Cys100, Cys103, and Cys115 each coordinate [2Fe-2S] cluster. The segment at 148–220 (FYAQYKSIEP…PAVLMQAYRW (73 aa)) is interaction with SDHAF1. The region spanning 178 to 208 (DREKLDGLYECILCACCSTSCPSYWWNGDKY) is the 4Fe-4S ferredoxin-type domain. [4Fe-4S] cluster-binding residues include Cys188, Cys191, and Cys194. Position 198 (Cys198) interacts with [3Fe-4S] cluster. Residue Trp203 participates in a ubiquinone binding. The [3Fe-4S] cluster site is built by Cys245 and Cys251. Cys255 contacts [4Fe-4S] cluster.

Belongs to the succinate dehydrogenase/fumarate reductase iron-sulfur protein family. Component of complex II composed of four subunits: the flavoprotein (FP) SDHA, iron-sulfur protein (IP) SDHB, and a cytochrome b560 composed of SDHC and SDHD. Interacts with SDHAF1; the interaction is required for iron-sulfur cluster incorporation into SDHB. Requires [2Fe-2S] cluster as cofactor. It depends on [3Fe-4S] cluster as a cofactor. The cofactor is [4Fe-4S] cluster.

It is found in the mitochondrion inner membrane. The catalysed reaction is a quinone + succinate = fumarate + a quinol. The enzyme catalyses (R)-malate + a quinone = enol-oxaloacetate + a quinol. It carries out the reaction (S)-malate + a quinone = enol-oxaloacetate + a quinol. The protein operates within carbohydrate metabolism; tricarboxylic acid cycle; fumarate from succinate (eukaryal route): step 1/1. With respect to regulation, enol-oxaloacetate inhibits the succinate dehydrogenase activity. Functionally, iron-sulfur protein (IP) subunit of the succinate dehydrogenase complex (mitochondrial respiratory chain complex II), responsible for transferring electrons from succinate to ubiquinone (coenzyme Q). SDH also oxidizes malate to the non-canonical enol form of oxaloacetate, enol-oxaloacetate. Enol-oxaloacetate, which is a potent inhibitor of the succinate dehydrogenase activity, is further isomerized into keto-oxaloacetate. This chain is Succinate dehydrogenase [ubiquinone] iron-sulfur subunit, mitochondrial (Sdhb), found in Mus musculus (Mouse).